A 325-amino-acid polypeptide reads, in one-letter code: Biotin synthase (325 aa).

Positions threonine 49–arginine 267 constitute a Radical SAM core domain. [4Fe-4S] cluster-binding residues include cysteine 64, cysteine 68, and cysteine 71. [2Fe-2S] cluster contacts are provided by cysteine 108, cysteine 139, cysteine 199, and arginine 271.

Belongs to the radical SAM superfamily. Biotin synthase family. Homodimer. [4Fe-4S] cluster is required as a cofactor. [2Fe-2S] cluster serves as cofactor.

It catalyses the reaction (4R,5S)-dethiobiotin + (sulfur carrier)-SH + 2 reduced [2Fe-2S]-[ferredoxin] + 2 S-adenosyl-L-methionine = (sulfur carrier)-H + biotin + 2 5'-deoxyadenosine + 2 L-methionine + 2 oxidized [2Fe-2S]-[ferredoxin]. It participates in cofactor biosynthesis; biotin biosynthesis; biotin from 7,8-diaminononanoate: step 2/2. In terms of biological role, catalyzes the conversion of dethiobiotin (DTB) to biotin by the insertion of a sulfur atom into dethiobiotin via a radical-based mechanism. This is Biotin synthase from Acidiphilium cryptum (strain JF-5).